Reading from the N-terminus, the 539-residue chain is uncharacterized protein (539 aa).

ABC transporter domains follow at residues 8–265 (VRIT…SRAL) and 307–537 (IELD…IGDM). Residue 339-346 (GDNGSGKS) coordinates ATP.

Belongs to the ABC transporter superfamily.

The protein resides in the mitochondrion. This is an uncharacterized protein from Saccharomyces cerevisiae (strain ATCC 204508 / S288c) (Baker's yeast).